The chain runs to 239 residues: Carboxy-S-adenosyl-L-methionine synthase (239 aa).

S-adenosyl-L-methionine is bound by residues Y35, 64–66 (GCS), 88–89 (DN), and R195.

This sequence belongs to the class I-like SAM-binding methyltransferase superfamily. Cx-SAM synthase family. As to quaternary structure, homodimer.

The catalysed reaction is prephenate + S-adenosyl-L-methionine = carboxy-S-adenosyl-L-methionine + 3-phenylpyruvate + H2O. Functionally, catalyzes the conversion of S-adenosyl-L-methionine (SAM) to carboxy-S-adenosyl-L-methionine (Cx-SAM). This chain is Carboxy-S-adenosyl-L-methionine synthase, found in Helicobacter pylori (strain G27).